The primary structure comprises 349 residues: Anthranilate phosphoribosyltransferase (349 aa).

5-phospho-alpha-D-ribose 1-diphosphate-binding positions include glycine 81, 84–85 (GD), threonine 89, 91–94 (NVST), 109–117 (KHGNRAASS), and alanine 121. Residue glycine 81 coordinates anthranilate. Serine 93 contacts Mg(2+). Position 112 (asparagine 112) interacts with anthranilate. Residue arginine 167 participates in anthranilate binding. Residues aspartate 226 and glutamate 227 each contribute to the Mg(2+) site.

Belongs to the anthranilate phosphoribosyltransferase family. As to quaternary structure, homodimer. The cofactor is Mg(2+).

It carries out the reaction N-(5-phospho-beta-D-ribosyl)anthranilate + diphosphate = 5-phospho-alpha-D-ribose 1-diphosphate + anthranilate. The protein operates within amino-acid biosynthesis; L-tryptophan biosynthesis; L-tryptophan from chorismate: step 2/5. Functionally, catalyzes the transfer of the phosphoribosyl group of 5-phosphorylribose-1-pyrophosphate (PRPP) to anthranilate to yield N-(5'-phosphoribosyl)-anthranilate (PRA). The chain is Anthranilate phosphoribosyltransferase from Methylocella silvestris (strain DSM 15510 / CIP 108128 / LMG 27833 / NCIMB 13906 / BL2).